The following is a 145-amino-acid chain: Sporulation-specific cell division protein Francci3_3418 (145 aa).

This sequence belongs to the SsgA family.

It is found in the cell septum. Involved in sporulation-specific cell division. This Frankia casuarinae (strain DSM 45818 / CECT 9043 / HFP020203 / CcI3) protein is Sporulation-specific cell division protein Francci3_3418.